The primary structure comprises 366 residues: Mitogen-activated protein kinase CPK1 (366 aa).

One can recognise a Protein kinase domain in the interval 17-302 (KLEEIVGEGA…SPSKRITVEE (286 aa)). ATP contacts are provided by residues 22–30 (VGEGAYGLV) and Lys-45. Asp-140 functions as the Proton acceptor in the catalytic mechanism. Phosphothreonine is present on Thr-181. Residues 181-183 (TEY) carry the TXY motif. A Phosphotyrosine modification is found at Tyr-183.

The protein belongs to the protein kinase superfamily. CMGC Ser/Thr protein kinase family. MAP kinase subfamily. Requires Mg(2+) as cofactor. Dually phosphorylated on Thr-181 and Tyr-183, which activates the enzyme.

The catalysed reaction is L-seryl-[protein] + ATP = O-phospho-L-seryl-[protein] + ADP + H(+). It carries out the reaction L-threonyl-[protein] + ATP = O-phospho-L-threonyl-[protein] + ADP + H(+). Its activity is regulated as follows. Activated by tyrosine and threonine phosphorylation. Responds to activation by environmental stress by phosphorylating downstream targets. This chain is Mitogen-activated protein kinase CPK1 (CPK1), found in Cryptococcus neoformans var. neoformans serotype D (strain B-3501A) (Filobasidiella neoformans).